A 427-amino-acid chain; its full sequence is L-threonine dehydratase biosynthetic IlvA (427 aa).

K63 carries the N6-(pyridoxal phosphate)lysine modification. Pyridoxal 5'-phosphate is bound by residues N90, 193–197 (GGGGC), and S319. The ACT-like domain occupies 343-417 (HYFLVDFPQK…TEMHVETLQP (75 aa)).

It belongs to the serine/threonine dehydratase family. In terms of assembly, homotetramer. Pyridoxal 5'-phosphate is required as a cofactor.

The catalysed reaction is L-threonine = 2-oxobutanoate + NH4(+). The protein operates within amino-acid biosynthesis; L-isoleucine biosynthesis; 2-oxobutanoate from L-threonine: step 1/1. Its function is as follows. Catalyzes the anaerobic formation of alpha-ketobutyrate and ammonia from threonine in a two-step reaction. The first step involved a dehydration of threonine and a production of enamine intermediates (aminocrotonate), which tautomerizes to its imine form (iminobutyrate). Both intermediates are unstable and short-lived. The second step is the nonenzymatic hydrolysis of the enamine/imine intermediates to form 2-ketobutyrate and free ammonia. In the low water environment of the cell, the second step is accelerated by RidA. This chain is L-threonine dehydratase biosynthetic IlvA (ilvA), found in Mycobacterium leprae (strain TN).